Consider the following 97-residue polypeptide: Conotoxin Cal6.1a (97 aa).

An N-terminal signal peptide occupies residues 1–22; it reads MKLTTVLVVALLVLAACQFTVT. The tract at residues 23-46 is disordered; sequence DNSGDDPENPSLRSVGENQNPDST. Positions 23 to 68 are excised as a propeptide; that stretch reads DNSGDDPENPSLRSVGENQNPDSTKTITAWATRDMTNMRRGLNRPS. Cystine bridges form between cysteine 71-cysteine 87, cysteine 78-cysteine 91, and cysteine 86-cysteine 96.

This sequence belongs to the conotoxin O1 superfamily. As to expression, expressed by the venom duct.

It is found in the secreted. In terms of biological role, probable neurotoxin with unknown target. Possibly targets ion channels. This chain is Conotoxin Cal6.1a, found in Californiconus californicus (California cone).